The chain runs to 131 residues: Small ribosomal subunit protein eS6 (131 aa).

Positions 76–95 (APPGFKPKRKGERRRKTVRG) are disordered. Residues 81 to 93 (KPKRKGERRRKTV) are compositionally biased toward basic residues.

This sequence belongs to the eukaryotic ribosomal protein eS6 family.

The chain is Small ribosomal subunit protein eS6 from Methanocaldococcus jannaschii (strain ATCC 43067 / DSM 2661 / JAL-1 / JCM 10045 / NBRC 100440) (Methanococcus jannaschii).